Consider the following 249-residue polypeptide: ATP synthase subunit a, chloroplastic (249 aa).

Helical transmembrane passes span 40–60 (QVLI…VLAI), 97–117 (VPFI…GALL), 136–156 (INTT…AGLS), 201–221 (LVVV…VMFL), and 222–242 (GLFT…AYIG).

Belongs to the ATPase A chain family. As to quaternary structure, F-type ATPases have 2 components, CF(1) - the catalytic core - and CF(0) - the membrane proton channel. CF(1) has five subunits: alpha(3), beta(3), gamma(1), delta(1), epsilon(1). CF(0) has four main subunits: a, b, b' and c.

The protein localises to the plastid. It is found in the chloroplast thylakoid membrane. Functionally, key component of the proton channel; it plays a direct role in the translocation of protons across the membrane. This Olimarabidopsis pumila (Dwarf rocket) protein is ATP synthase subunit a, chloroplastic.